A 142-amino-acid chain; its full sequence is Large ribosomal subunit protein uL13 (142 aa).

This sequence belongs to the universal ribosomal protein uL13 family. As to quaternary structure, part of the 50S ribosomal subunit.

Functionally, this protein is one of the early assembly proteins of the 50S ribosomal subunit, although it is not seen to bind rRNA by itself. It is important during the early stages of 50S assembly. This chain is Large ribosomal subunit protein uL13, found in Methanosphaera stadtmanae (strain ATCC 43021 / DSM 3091 / JCM 11832 / MCB-3).